The following is a 363-amino-acid chain: Flagellar P-ring protein (363 aa).

Residues 1 to 21 (MKTVINIFILFTFLASLSANA) form the signal peptide.

It belongs to the FlgI family. As to quaternary structure, the basal body constitutes a major portion of the flagellar organelle and consists of four rings (L,P,S, and M) mounted on a central rod.

It localises to the periplasm. It is found in the bacterial flagellum basal body. Functionally, assembles around the rod to form the L-ring and probably protects the motor/basal body from shearing forces during rotation. The sequence is that of Flagellar P-ring protein from Colwellia psychrerythraea (strain 34H / ATCC BAA-681) (Vibrio psychroerythus).